A 127-amino-acid chain; its full sequence is MRKIPIIAGVFSLLITSCTFAASLQDDMNILIANLGIVSSSTDTKVITSSLEKMRNAALDAQKAIPPKLEGKAEDSPEIKDYRHGFDLLIEQIDKTKQWAEEGNIQEVKKSVGEVINIRNTYHSRYR.

The signal sequence occupies residues 1–21 (MRKIPIIAGVFSLLITSCTFA). 2 residues coordinate heme b: M28 and H123.

This sequence belongs to the cytochrome b562 family. Requires heme b as cofactor.

The protein resides in the periplasm. Its function is as follows. Electron-transport protein of unknown function. This chain is Probable soluble cytochrome b562 1 (cybC1), found in Yersinia pestis.